The primary structure comprises 174 residues: Glutaredoxin-C5, chloroplastic (174 aa).

Residues 1 to 51 (MAVTAFNTLKLVSSSLDPIPSVSCSSYSFSLIYVGSPYKRCLKQSCSVRAM) constitute a chloroplast transit peptide. Threonine 52 is subject to N-acetylthreonine. At cysteine 90 the chain carries S-glutathionyl cysteine; partial. Cysteine 90 and cysteine 93 are disulfide-bonded. In terms of domain architecture, Glutaredoxin spans 93–171 (CTEVKTLFKR…LMLAEANGKN (79 aa)). The glutathione site is built by valine 135, cysteine 148, and threonine 149. Residue cysteine 148 is modified to S-glutathionyl cysteine; partial.

Belongs to the glutaredoxin family. CPYC subfamily. In terms of assembly, monomeric apoprotein and homodimeric holoprotein containing a [2Fe-2S] cluster. No in vitro interactions with SUFE1, BOLA1, BOLA2 or BOLA4. Post-translationally, glutathionylated.

The protein localises to the plastid. The protein resides in the chloroplast. Functionally, has a glutathione-disulfide oxidoreductase activity in the presence of NADPH and glutathione reductase. Reduces low molecular weight disulfides and proteins. Can assemble a [2Fe-2S] cluster, but cannot transfer it to an apoferredoxin. This Arabidopsis thaliana (Mouse-ear cress) protein is Glutaredoxin-C5, chloroplastic.